We begin with the raw amino-acid sequence, 251 residues long: Probable inactive cytidine deaminase 4 (251 aa).

61–63 (NVE) serves as a coordination point for substrate. The active-site Proton donor is the Glu-76. A CMP/dCMP-type deaminase domain is found at 136–251 (EHCSHLKCRA…VFRCHKTAEN (116 aa)).

The protein belongs to the cytidine and deoxycytidylate deaminase family. As to quaternary structure, homodimer.

This chain is Probable inactive cytidine deaminase 4 (CDA4), found in Arabidopsis thaliana (Mouse-ear cress).